Reading from the N-terminus, the 757-residue chain is RNA exonuclease 3 (757 aa).

Disordered stretches follow at residues 56–259 and 474–590; these read VKRE…AEHL and ESLD…CDQA. The segment covering 120–132 has biased composition (basic and acidic residues); that stretch reads EGGRAEGAEKKEF. Polar residues-rich tracts occupy residues 145 to 172, 202 to 223, and 230 to 240; these read TPHA…SSVS, QPSS…SSPK, and MTTSASPSQSR. Low complexity-rich tracts occupy residues 244-253 and 474-502; these read RNTSASPSSS and ESLD…KTAS. Residues 503 to 516 are compositionally biased toward polar residues; that stretch reads RPASTPTKSLTSSL. Composition is skewed to basic and acidic residues over residues 543–557 and 565–581; these read REPD…RGIG and SQER…RVRE. The region spanning 597–751 is the Exonuclease domain; it reads VVAVDCEMLY…EDALAALDVV (155 aa).

It belongs to the REXO1/REXO3 family.

It localises to the cytoplasm. The protein localises to the nucleus. Functionally, 3' to 5' exoribonuclease required for proper 3' end maturation of MRP RNA and of the U5L snRNA. In Yarrowia lipolytica (strain CLIB 122 / E 150) (Yeast), this protein is RNA exonuclease 3 (REX3).